A 114-amino-acid chain; its full sequence is MSCQQSQQQCQPPPKCTPKCTPKCPAPKCPPKCPPVSSCCSVSSGGCCGSSSGGGCGSNSGGCCSSGGGGCCLSHHRRHRSHRRRPQSSDCCSQPSGGSSCCGGGSSQHSGGCC.

Positions 1-10 (MSCQQSQQQC) are enriched in low complexity. Disordered stretches follow at residues 1–21 (MSCQQSQQQCQPPPKCTPKCT) and 75–114 (HHRRHRSHRRRPQSSDCCSQPSGGSSCCGGGSSQHSGGCC). Positions 75-86 (HHRRHRSHRRRP) are enriched in basic residues. Low complexity predominate over residues 88-99 (SSDCCSQPSGGS).

This sequence belongs to the LCE family. Interacts with CYSRT1. As to expression, skin-specific. Expression was readily detected in adult trunk skin, adult arm skin, fetal skin, penal skin, vulva, esophagus and tongue. Not expressed in the cervix, rectum, lung, colon, or placenta.

Precursors of the cornified envelope of the stratum corneum. In Homo sapiens (Human), this protein is Late cornified envelope protein 1D (LCE1D).